The following is a 462-amino-acid chain: Cysteine--tRNA ligase (462 aa).

Cysteine 28 contributes to the Zn(2+) binding site. The 'HIGH' region motif lies at 30–40; that stretch reads ITVYDLCHIGH. Cysteine 210, histidine 235, and glutamate 239 together coordinate Zn(2+). A 'KMSKS' region motif is present at residues 267–271; it reads KMSKS. Lysine 270 is a binding site for ATP.

The protein belongs to the class-I aminoacyl-tRNA synthetase family. As to quaternary structure, monomer. The cofactor is Zn(2+).

It is found in the cytoplasm. It catalyses the reaction tRNA(Cys) + L-cysteine + ATP = L-cysteinyl-tRNA(Cys) + AMP + diphosphate. The sequence is that of Cysteine--tRNA ligase from Erwinia tasmaniensis (strain DSM 17950 / CFBP 7177 / CIP 109463 / NCPPB 4357 / Et1/99).